A 156-amino-acid chain; its full sequence is Succinate dehydrogenase assembly factor 2-B, mitochondrial (156 aa).

A mitochondrion-targeting transit peptide spans 1–24 (MLRQFIISTVGRRQPLLMILQSRL).

It belongs to the SDHAF2 family. Interacts with the flavoprotein subunit within the SDH catalytic dimer.

The protein resides in the mitochondrion matrix. Its function is as follows. Plays an essential role in the assembly of succinate dehydrogenase (SDH), an enzyme complex (also referred to as respiratory complex II) that is a component of both the tricarboxylic acid (TCA) cycle and the mitochondrial electron transport chain, and which couples the oxidation of succinate to fumarate with the reduction of ubiquinone (coenzyme Q) to ubiquinol. Required for flavinylation (covalent attachment of FAD) of the flavoprotein subunit of the SDH catalytic dimer. This chain is Succinate dehydrogenase assembly factor 2-B, mitochondrial, found in Drosophila yakuba (Fruit fly).